The primary structure comprises 696 residues: Tegument protein UL47 (696 aa).

Composition is skewed to basic residues over residues 1 to 15 (MSVR…RAST) and 70 to 81 (RRRREARGHPGS). Disordered regions lie at residues 1–39 (MSVR…GGVG) and 54–130 (SEVE…YLGP). Positions 57–84 (EAAGEMASEEPPPRRRREARGHPGSRRA) are RNA-binding. The Nuclear localization signal signature appears at 70–84 (RRRREARGHPGSRRA). Low complexity predominate over residues 87–103 (ARAAAPPRRASFPRPRS). The Nuclear export signal signature appears at 650–673 (SVLGPRVRVVDIMAQFRKLLMGDE).

Belongs to the alphaherpesvirinae HHV-1 UL47 family. In terms of assembly, interacts with US3 kinase. Interacts with UL31 and UL34; these interactions seem important for efficient virion nuclear egress. Interacts with UL41/VHS. Phosphorylated by US3. This phosphorylation is required for proper nuclear localization.

The protein localises to the virion tegument. It localises to the host nucleus. The protein resides in the host cytoplasm. Tegument protein that can bind to various RNA transcripts. Plays a role in the attenuation of selective viral and cellular mRNA degradation by modulating the activity of host shutoff RNase UL41/VHS. Also plays a role in the primary envelopment of virions in the perinuclear space, probably by interacting with two nuclear egress proteins UL31 and UL34. This chain is Tegument protein UL47, found in Human herpesvirus 2 (strain HG52) (HHV-2).